A 379-amino-acid polypeptide reads, in one-letter code: S-adenosylmethionine decarboxylase proenzyme (379 aa).

Catalysis depends on residues E30 and E33. Catalysis depends on S96, which acts as the Schiff-base intermediate with substrate; via pyruvic acid. Position 96 is a pyruvic acid (Ser); by autocatalysis (S96). C110 (proton donor; for catalytic activity) is an active-site residue. Active-site proton acceptor; for processing activity residues include S254 and H267.

It belongs to the eukaryotic AdoMetDC family. As to quaternary structure, heterotetramer of two alpha and two beta chains. The cofactor is pyruvate. Post-translationally, is synthesized initially as an inactive proenzyme. Formation of the active enzyme involves a self-maturation process in which the active site pyruvoyl group is generated from an internal serine residue via an autocatalytic post-translational modification. Two non-identical subunits are generated from the proenzyme in this reaction, and the pyruvate is formed at the N-terminus of the alpha chain, which is derived from the carboxyl end of the proenzyme. The post-translation cleavage follows an unusual pathway, termed non-hydrolytic serinolysis, in which the side chain hydroxyl group of the serine supplies its oxygen atom to form the C-terminus of the beta chain, while the remainder of the serine residue undergoes an oxidative deamination to produce ammonia and the pyruvoyl group blocking the N-terminus of the alpha chain.

It carries out the reaction S-adenosyl-L-methionine + H(+) = S-adenosyl 3-(methylsulfanyl)propylamine + CO2. The protein operates within amine and polyamine biosynthesis; S-adenosylmethioninamine biosynthesis; S-adenosylmethioninamine from S-adenosyl-L-methionine: step 1/1. Functionally, S-adenosylmethionine decarboxylase is essential for the biosynthesis of spermine and spermidine. The alpha subunit contains the active site. This chain is S-adenosylmethionine decarboxylase proenzyme (amd1), found in Dictyostelium discoideum (Social amoeba).